A 278-amino-acid chain; its full sequence is E3 ubiquitin-protein ligase CHIP (278 aa).

3 TPR repeats span residues 10-43, 45-77, and 78-111; these read AERL…SPNV, AYWT…VHNS, and VKAH…GRCS. A coiled-coil region spans residues 143–194; that stretch reads ELNSLKETCEAALNQQRALDMSRTEESSDEAYTAHTERLKALERVFKKAAEE. Residues 199–273 form the U-box domain; the sequence is EVPDYLCCNI…AAYLEKHVWA (75 aa).

In terms of assembly, interacts with HSC70-4, PP2AA1, PP2AA3 and PP2A5, as well as with UBC8, UBC9 and UBC10. Also interacts with the chloroplastic proteolytic subunits ClpP4, FtsH1 and FtsH2.

It catalyses the reaction S-ubiquitinyl-[E2 ubiquitin-conjugating enzyme]-L-cysteine + [acceptor protein]-L-lysine = [E2 ubiquitin-conjugating enzyme]-L-cysteine + N(6)-ubiquitinyl-[acceptor protein]-L-lysine.. Its pathway is protein modification; protein ubiquitination. Has E3 ubiquitin-protein ligase activity and may target misfolded substrates towards proteasomal degradation. Regulates the activity of some serine/threonine-protein phosphatases by E3 ubiquitin-protein ligase activity. Required for responses to biotic and abiotic stresses such as auxin, abscisic acid (ABA), low and high temperature and darkness, probably through the activation of serine/threonine-protein phosphatase and the subsequent modification of the plasma membrane composition. Regulates the chloroplastic Clp proteolytic activity in response to stresses. Ubiquitylates FtsH1, a component of the chloroplast FtsH protease, and affects protein degradation in chloroplasts. Mediates plastid precursor degradation to prevent cytosolic precursor accumulation, together with the molecular chaperone HSC70-4. Mediates ubiquitination of transit peptides and thereby led to their degradation through the ubiquitin-proteasome system. This chain is E3 ubiquitin-protein ligase CHIP, found in Arabidopsis thaliana (Mouse-ear cress).